A 197-amino-acid polypeptide reads, in one-letter code: UPF0301 protein BAV3012 (197 aa).

This sequence belongs to the UPF0301 (AlgH) family.

The polypeptide is UPF0301 protein BAV3012 (Bordetella avium (strain 197N)).